We begin with the raw amino-acid sequence, 429 residues long: Inner membrane transport protein RhmT (429 aa).

At 1 to 16 (MSTALLDAVVKKNRVR) the chain is on the cytoplasmic side. The helical transmembrane segment at 17–37 (LIPFMLALYVLAFLDRSNIGF) threads the bilayer. Over 38–54 (AKQTYQIDTGLSNEAYA) the chain is Periplasmic. A helical transmembrane segment spans residues 55–75 (LGAGIFFVVYAFLGVPANLLM). Topologically, residues 76-81 (RKLGAR) are cytoplasmic. Residues 82–102 (TWIGTTTLLWGFLSAAMAWAD) form a helical membrane-spanning segment. Over 103 to 143 (TEAKFLIVRTLLRAAEAGFFPGMIYLTSQWFPQRNRASIMG) the chain is Periplasmic. A helical membrane pass occupies residues 144–164 (LFYMGAPLALTLGSPLSGALL). At 165 to 174 (EMHGFMGHPG) the chain is on the cytoplasmic side. Residues 175-195 (WFWMFVIEGLLAVGAGVFTFF) form a helical membrane-spanning segment. Residues 196 to 242 (WLDDTPEQARFLSKQEKTLLINQLASEEQQKVTSRLSDALRNGRVWQ) are Periplasmic-facing. The helical transmembrane segment at 243–263 (LAIIYLTIQVAVYGLIFFLPT) threads the bilayer. The Cytoplasmic segment spans residues 264 to 274 (QVAALLGTKVG). The helical transmembrane segment at 275–295 (FTASVVTAIPWVAALFGTWLI) threads the bilayer. The Periplasmic portion of the chain corresponds to 296 to 324 (PRYSDKTGERRNVAALTLLAAGIGIGLSG). Residues 325 to 345 (LLSPVMAIVALCVAAIGFIAV) traverse the membrane as a helical segment. The Cytoplasmic portion of the chain corresponds to 346–361 (QPVFWTMPTQLLSGTA). Residues 362-382 (LAAGIGFVNLFGAVGGFIAPI) form a helical membrane-spanning segment. Residues 383-394 (LRVKAETLFASD) are Periplasmic-facing. The helical transmembrane segment at 395–415 (AAGLLTLAAVAVIGSLIIFTL) threads the bilayer. The Cytoplasmic portion of the chain corresponds to 416 to 429 (RVNRTVAQTDVAHH).

The protein belongs to the major facilitator superfamily. Phthalate permease family.

It is found in the cell inner membrane. This chain is Inner membrane transport protein RhmT (rhmT), found in Escherichia coli (strain K12).